Consider the following 567-residue polypeptide: Delta(24)-sterol reductase (567 aa).

The Lumenal segment spans residues 1–24 (MSDLEAPLRPKRKKIWVDYFVKFR). Residues 25–45 (WILVIFVVLPISFTLYFLTYL) traverse the membrane as a helical; Signal-anchor segment. One can recognise an FAD-binding PCMH-type domain in the interval 45-231 (LGDVRSEWKS…VAAEVKLIPI (187 aa)). Over 46–567 (GDVRSEWKSF…AYPEVDQPPD (522 aa)) the chain is Cytoplasmic. Residues 520–541 (CRRKYGAVGTFMSVYYKCKKGR) form an interaction with calmodulin region. The interval 548–567 (REAEQAHLDTAYPEVDQPPD) is disordered.

This sequence belongs to the DIMINUTO family. Highly expressed in the apical region and root tips and lower levels in immature and mature internodes and leaves.

It localises to the membrane. The catalysed reaction is lathosterol + NADP(+) = 5alpha-cholesta-7,24-dien-3beta-ol + NADPH + H(+). Functionally, plays a critical role in the general process of plant cell elongation. The protein is Delta(24)-sterol reductase (DIM) of Pisum sativum (Garden pea).